A 418-amino-acid chain; its full sequence is Putative F-box protein At3g23950 (418 aa).

In terms of domain architecture, F-box spans 1 to 42; it reads MNIPPELTFEVLVRLPLKSLARFRSMCKEWKLVIDSEFFRDC.

The polypeptide is Putative F-box protein At3g23950 (Arabidopsis thaliana (Mouse-ear cress)).